We begin with the raw amino-acid sequence, 600 residues long: ATP-dependent lipid A-core flippase (600 aa).

Transmembrane regions (helical) follow at residues 28–48 (IMAV…IAFI), 80–100 (IMLM…VANF), 182–202 (WKLS…ISVV), 267–287 (ISQP…LYAA), and 295–315 (DLTA…LQPI). An ABC transmembrane type-1 domain is found at 28-327 (IMAVLGLITY…LTRVNAEFQR (300 aa)). In terms of domain architecture, ABC transporter spans 359-596 (LAFDNVTFAY…AGIYANLYQM (238 aa)). 393–400 (GRSGSGKS) lines the ATP pocket.

Belongs to the ABC transporter superfamily. Lipid exporter (TC 3.A.1.106) family. Homodimer.

Its subcellular location is the cell inner membrane. It catalyses the reaction ATP + H2O + lipid A-core oligosaccharideSide 1 = ADP + phosphate + lipid A-core oligosaccharideSide 2.. Involved in lipopolysaccharide (LPS) biosynthesis. Translocates lipid A-core from the inner to the outer leaflet of the inner membrane. Transmembrane domains (TMD) form a pore in the inner membrane and the ATP-binding domain (NBD) is responsible for energy generation. The protein is ATP-dependent lipid A-core flippase of Shewanella frigidimarina (strain NCIMB 400).